The primary structure comprises 366 residues: Ribosomal RNA large subunit methyltransferase M (366 aa).

Residues Ser-188, 221–224 (CPGG), Asp-240, Asp-260, and Asp-277 contribute to the S-adenosyl-L-methionine site. Lys-306 (proton acceptor) is an active-site residue.

Belongs to the class I-like SAM-binding methyltransferase superfamily. RNA methyltransferase RlmE family. RlmM subfamily. As to quaternary structure, monomer.

The protein localises to the cytoplasm. The catalysed reaction is cytidine(2498) in 23S rRNA + S-adenosyl-L-methionine = 2'-O-methylcytidine(2498) in 23S rRNA + S-adenosyl-L-homocysteine + H(+). Functionally, catalyzes the 2'-O-methylation at nucleotide C2498 in 23S rRNA. This chain is Ribosomal RNA large subunit methyltransferase M, found in Pectobacterium atrosepticum (strain SCRI 1043 / ATCC BAA-672) (Erwinia carotovora subsp. atroseptica).